Reading from the N-terminus, the 63-residue chain is Large ribosomal subunit protein uL29 (63 aa).

The protein belongs to the universal ribosomal protein uL29 family.

In Chromohalobacter salexigens (strain ATCC BAA-138 / DSM 3043 / CIP 106854 / NCIMB 13768 / 1H11), this protein is Large ribosomal subunit protein uL29.